A 426-amino-acid chain; its full sequence is UPF0597 protein CLI_1810 (426 aa).

This sequence belongs to the UPF0597 family.

In Clostridium botulinum (strain Langeland / NCTC 10281 / Type F), this protein is UPF0597 protein CLI_1810.